The chain runs to 174 residues: UPF0316 protein lwe1794 (174 aa).

Helical transmembrane passes span 4–24, 36–56, and 62–82; these read GLFI…IYTV, LAAL…SLVL, and IANV…GMKI.

This sequence belongs to the UPF0316 family.

The protein resides in the cell membrane. The polypeptide is UPF0316 protein lwe1794 (Listeria welshimeri serovar 6b (strain ATCC 35897 / DSM 20650 / CCUG 15529 / CIP 8149 / NCTC 11857 / SLCC 5334 / V8)).